The chain runs to 417 residues: NADH-quinone oxidoreductase subunit D (417 aa).

This sequence belongs to the complex I 49 kDa subunit family. As to quaternary structure, NDH-1 is composed of 14 different subunits. Subunits NuoB, C, D, E, F, and G constitute the peripheral sector of the complex.

It is found in the cell inner membrane. It catalyses the reaction a quinone + NADH + 5 H(+)(in) = a quinol + NAD(+) + 4 H(+)(out). Its function is as follows. NDH-1 shuttles electrons from NADH, via FMN and iron-sulfur (Fe-S) centers, to quinones in the respiratory chain. The immediate electron acceptor for the enzyme in this species is believed to be ubiquinone. Couples the redox reaction to proton translocation (for every two electrons transferred, four hydrogen ions are translocated across the cytoplasmic membrane), and thus conserves the redox energy in a proton gradient. This is NADH-quinone oxidoreductase subunit D from Burkholderia cenocepacia (strain HI2424).